The following is a 355-amino-acid chain: MDSKSLAKSKRAHTLHHSKKSHSVHKPKVPGVSEKNPEKLQGNQTKSPVQSRRVSALPSNWDRYDDELDAAEDSSISLHSDVIVPKSKGADYLHLISEAQAESNSKIENNLDCLSSLDDLLHDEFSRVVGSMISARGEGILSWMEDDNFVVEEDGSGSYQEPGFLSLNLNVLAKTLENVDLHERLYIDPDLLPLPELNTSQTKVSRNEEPSHSHIAQNDPIVVPGESSVREAESLDQVKDILILTDESEKSSAIEADLDLLLNSFSEAHTQPNPVASASGKSSAFETELDSLLKSHSSTEQFNKPGNPSDQKIHMTGFNDVLDDLLESTPVSIIPQSNQTSSKVLDDFDSWLDTI.

Disordered stretches follow at residues 1–60 (MDSK…LPSN) and 296–315 (HSSTEQFNKPGNPSDQKIHM). The segment covering 7–28 (AKSKRAHTLHHSKKSHSVHKPK) has biased composition (basic residues). Composition is skewed to polar residues over residues 41 to 53 (QGNQTKSPVQSRR) and 296 to 310 (HSSTEQFNKPGNPSD).

As to quaternary structure, interacts with RST1. As to expression, expressed in taproots, lateral roots, root tips, leaf veins, cauline leaves, inflorescences, flowers, and siliques.

It is found in the cytoplasm. It localises to the cytosol. The protein localises to the endoplasmic reticulum. Its function is as follows. Together with RST1, acts as a cofactor of the cytoplasmic exosome and connects the cytosolic RNA exosome to the SKI complex. Acts as a post-transcriptional gene silencing (PTGS) suppressor. CER16/RIPR can, like RST1 suppress the production of small interfering RNAs (siRNAs) from the CER3 locus, which is involved in cuticule membrane and wax production, and in the typhine and sporopollenin biosynthesis of pollen. The polypeptide is Protein ECERIFERUM 16 (Arabidopsis thaliana (Mouse-ear cress)).